A 366-amino-acid chain; its full sequence is UDP-N-acetylglucosamine--N-acetylmuramyl-(pentapeptide) pyrophosphoryl-undecaprenol N-acetylglucosamine transferase (366 aa).

UDP-N-acetyl-alpha-D-glucosamine-binding positions include 17–19 (TGG), Asn-129, Arg-169, Ser-195, Ile-251, 270–275 (ALTVSE), and Gln-296.

Belongs to the glycosyltransferase 28 family. MurG subfamily.

It is found in the cell inner membrane. The enzyme catalyses di-trans,octa-cis-undecaprenyl diphospho-N-acetyl-alpha-D-muramoyl-L-alanyl-D-glutamyl-meso-2,6-diaminopimeloyl-D-alanyl-D-alanine + UDP-N-acetyl-alpha-D-glucosamine = di-trans,octa-cis-undecaprenyl diphospho-[N-acetyl-alpha-D-glucosaminyl-(1-&gt;4)]-N-acetyl-alpha-D-muramoyl-L-alanyl-D-glutamyl-meso-2,6-diaminopimeloyl-D-alanyl-D-alanine + UDP + H(+). Its pathway is cell wall biogenesis; peptidoglycan biosynthesis. In terms of biological role, cell wall formation. Catalyzes the transfer of a GlcNAc subunit on undecaprenyl-pyrophosphoryl-MurNAc-pentapeptide (lipid intermediate I) to form undecaprenyl-pyrophosphoryl-MurNAc-(pentapeptide)GlcNAc (lipid intermediate II). The chain is UDP-N-acetylglucosamine--N-acetylmuramyl-(pentapeptide) pyrophosphoryl-undecaprenol N-acetylglucosamine transferase from Shewanella denitrificans (strain OS217 / ATCC BAA-1090 / DSM 15013).